A 417-amino-acid chain; its full sequence is uncharacterized protein (417 aa).

The next 9 helical transmembrane spans lie at 1-21, 32-52, 96-116, 168-188, 192-212, 261-281, 286-306, 351-371, and 392-412; these read MSVL…VLLS, VVGA…VPAG, VLPI…LGIM, LFAI…AGYA, VPLT…LLFA, IAFV…GGWF, LTLQ…IGVT, AIIT…ILIG, and VIAG…FIGL.

Belongs to the concentrative nucleoside transporter (CNT) (TC 2.A.41) family.

It is found in the cell inner membrane. This is an uncharacterized protein from Haemophilus influenzae (strain ATCC 51907 / DSM 11121 / KW20 / Rd).